Consider the following 458-residue polypeptide: Argininosuccinate lyase (458 aa).

The protein belongs to the lyase 1 family. Argininosuccinate lyase subfamily.

Its subcellular location is the cytoplasm. The catalysed reaction is 2-(N(omega)-L-arginino)succinate = fumarate + L-arginine. Its pathway is amino-acid biosynthesis; L-arginine biosynthesis; L-arginine from L-ornithine and carbamoyl phosphate: step 3/3. The protein is Argininosuccinate lyase of Vibrio cholerae serotype O1 (strain ATCC 39541 / Classical Ogawa 395 / O395).